A 619-amino-acid chain; its full sequence is UPF0329 protein ECU01_0100/ECU01_1510/ECU08_0030 (619 aa).

Positions 350–384 (REEREKREKREKREESKGRGKRGAGEAKEESKEED) are enriched in basic and acidic residues. Residues 350-428 (REEREKREKR…GKRKGDGHHY (79 aa)) form a disordered region. The segment covering 385–399 (GKEEEGVEAEEEESA) has biased composition (acidic residues). Residues 411-428 (ARRKKSLKGKRKGDGHHY) are compositionally biased toward basic residues.

This sequence belongs to the UPF0329 family.

The protein is UPF0329 protein ECU01_0100/ECU01_1510/ECU08_0030 of Encephalitozoon cuniculi (strain GB-M1) (Microsporidian parasite).